The following is a 305-amino-acid chain: tRNA dimethylallyltransferase (305 aa).

ATP is bound at residue glycine 11–threonine 18. Threonine 13–threonine 18 provides a ligand contact to substrate. Positions aspartate 36 to glutamine 39 are interaction with substrate tRNA.

The protein belongs to the IPP transferase family. As to quaternary structure, monomer. Mg(2+) serves as cofactor.

It catalyses the reaction adenosine(37) in tRNA + dimethylallyl diphosphate = N(6)-dimethylallyladenosine(37) in tRNA + diphosphate. Catalyzes the transfer of a dimethylallyl group onto the adenine at position 37 in tRNAs that read codons beginning with uridine, leading to the formation of N6-(dimethylallyl)adenosine (i(6)A). The protein is tRNA dimethylallyltransferase of Listeria innocua serovar 6a (strain ATCC BAA-680 / CLIP 11262).